The primary structure comprises 183 residues: Adenine phosphoribosyltransferase (183 aa).

It belongs to the purine/pyrimidine phosphoribosyltransferase family. In terms of assembly, homodimer.

It is found in the cytoplasm. It catalyses the reaction AMP + diphosphate = 5-phospho-alpha-D-ribose 1-diphosphate + adenine. It participates in purine metabolism; AMP biosynthesis via salvage pathway; AMP from adenine: step 1/1. Catalyzes a salvage reaction resulting in the formation of AMP, that is energically less costly than de novo synthesis. This Shewanella pealeana (strain ATCC 700345 / ANG-SQ1) protein is Adenine phosphoribosyltransferase.